Reading from the N-terminus, the 124-residue chain is Fluoride-specific ion channel FluC (124 aa).

4 consecutive transmembrane segments (helical) span residues 1 to 21, 34 to 54, 62 to 82, and 101 to 121; these read MIGVTLAVAVGGALGCLLRFA, FYAATLAVNIAGCLLIGYLYG, VPLALRAGLIAGFLGGLTTFS, and FSYLAFSVLGGLLATWAGLIL. Na(+)-binding residues include Gly76 and Thr79.

The protein belongs to the fluoride channel Fluc/FEX (TC 1.A.43) family.

It localises to the cell inner membrane. It carries out the reaction fluoride(in) = fluoride(out). With respect to regulation, na(+) is not transported, but it plays an essential structural role and its presence is essential for fluoride channel function. Fluoride-specific ion channel. Important for reducing fluoride concentration in the cell, thus reducing its toxicity. The sequence is that of Fluoride-specific ion channel FluC from Azotobacter vinelandii (strain DJ / ATCC BAA-1303).